Here is a 143-residue protein sequence, read N- to C-terminus: Large ribosomal subunit protein uL11 (143 aa).

Belongs to the universal ribosomal protein uL11 family. Part of the ribosomal stalk of the 50S ribosomal subunit. Interacts with L10 and the large rRNA to form the base of the stalk. L10 forms an elongated spine to which L12 dimers bind in a sequential fashion forming a multimeric L10(L12)X complex. Post-translationally, one or more lysine residues are methylated.

In terms of biological role, forms part of the ribosomal stalk which helps the ribosome interact with GTP-bound translation factors. In Kineococcus radiotolerans (strain ATCC BAA-149 / DSM 14245 / SRS30216), this protein is Large ribosomal subunit protein uL11.